Reading from the N-terminus, the 166-residue chain is Large ribosomal subunit protein uL10 (166 aa).

This sequence belongs to the universal ribosomal protein uL10 family. Part of the ribosomal stalk of the 50S ribosomal subunit. The N-terminus interacts with L11 and the large rRNA to form the base of the stalk. The C-terminus forms an elongated spine to which L12 dimers bind in a sequential fashion forming a multimeric L10(L12)X complex.

Functionally, forms part of the ribosomal stalk, playing a central role in the interaction of the ribosome with GTP-bound translation factors. In Aromatoleum aromaticum (strain DSM 19018 / LMG 30748 / EbN1) (Azoarcus sp. (strain EbN1)), this protein is Large ribosomal subunit protein uL10.